The primary structure comprises 113 residues: Iron-sulfur cluster insertion protein ErpA (113 aa).

Iron-sulfur cluster-binding residues include Cys41, Cys105, and Cys107.

It belongs to the HesB/IscA family. Homodimer. Iron-sulfur cluster is required as a cofactor.

Functionally, required for insertion of 4Fe-4S clusters for at least IspG. The polypeptide is Iron-sulfur cluster insertion protein ErpA (Actinobacillus pleuropneumoniae serotype 3 (strain JL03)).